The primary structure comprises 236 residues: Protein INCA1 (236 aa).

S23 is modified (phosphoserine). The segment at 75–99 (GLYPPEQLPPPEMLWRRKKRRPCLE) is interaction with CCNA1 and CCNA1/CDK2 complex; essential for CDK2 inhibitory activity. Residues 90–95 (RRKKRR) carry the Nuclear localization signal motif. T182 carries the phosphothreonine modification. S191 and S194 each carry phosphoserine.

Belongs to the INCA family. Interacts with CCNA1. Interacts with CCNA2, CCNB1 and CCNE1. Found in a complex with CCNA1 and CDK2. Interacts with ZNF16; the interaction inhibits INCA1 activity and induces the cell cycle process. Interacts with SPACA9. Interacts with the CCNA1/CDK2 complex. Interacts with ING5, DAZAP2, RNF26, USP15, SPOUT1, DPH7, TRIM26 and RAB5C. In terms of processing, phosphorylated when part of a complex with CCNA1 and CDK2. Strongly phosphorylated by CDK2 on its C-terminal region spanning amino acid 149-221. Less intensively phosphorylated by CDK2 on its first 75 amino acid residues. Detected in testis, and at lower levels in ovary. Detected at very low levels in testis tumors. Down-regulated in bone marrow cells in acute myeloid and lymphoid leukemia patients as compared with normal bone marrow cells.

Its subcellular location is the nucleus. It localises to the cytoplasm. In terms of biological role, binds to CDK2-bound cyclins and inhibits the kinase activity of CDK2; binding to cyclins is critical for its function as CDK inhibitor. Inhibits cell growth and cell proliferation and may play a role in cell cycle control. Required for ING5-mediated regulation of S-phase progression, enhancement of Fas-induced apoptosis and inhibition of cell growth. This is Protein INCA1 (INCA1) from Homo sapiens (Human).